We begin with the raw amino-acid sequence, 55 residues long: Large ribosomal subunit protein bL32c (55 aa).

The protein belongs to the bacterial ribosomal protein bL32 family.

The protein localises to the plastid. It localises to the chloroplast. The sequence is that of Large ribosomal subunit protein bL32c from Atropa belladonna (Belladonna).